A 582-amino-acid polypeptide reads, in one-letter code: Pescadillo homolog (582 aa).

Residues 277–329 (LSALSASLARVVATVEEEENQLDNFPTEEEDQENMQAREKEQKEQEAQKRLFE) are a coiled coil. Residues 294–309 (EENQLDNFPTEEEDQE) show a composition bias toward acidic residues. Positions 294 to 317 (EENQLDNFPTEEEDQENMQAREKE) are disordered. One can recognise a BRCT domain in the interval 323 to 416 (AQKRLFEGLK…MRLPVEDYFL (94 aa)). Positions 445–454 (ALQRGEKPVQ) are enriched in basic and acidic residues. 2 disordered regions span residues 445-511 (ALQR…ETGS) and 554-582 (REVN…AKKQ). The span at 455–477 (EEDEEEEDEDEEEDDDVDDEEFT) shows a compositional bias: acidic residues. Positions 478–490 (EEKNLKKMEDTRA) are enriched in basic and acidic residues. Residues 517–582 (RLEQEEKAEE…QKKQKKAKKQ (66 aa)) adopt a coiled-coil conformation. The span at 572-582 (AQKKQKKAKKQ) shows a compositional bias: basic residues.

This sequence belongs to the pescadillo family. As to quaternary structure, component of the PeBoW complex, composed of bop1, pes1 and wdr12. The complex is held together by bop1, which interacts with pes1 via its N-terminal domain and with wdr12 via a high-affinity interaction between the seven-bladed beta-propeller domains of the 2 proteins. The PeBoW complex associates with the 66S pre-ribosome.

It is found in the nucleus. Its subcellular location is the nucleolus. The protein resides in the nucleoplasm. Functionally, component of the PeBoW complex, which is required for maturation of 28S and 5.8S ribosomal RNAs and formation of the 60S ribosome. This is Pescadillo homolog (pes1) from Salmo salar (Atlantic salmon).